The primary structure comprises 255 residues: GTP cyclohydrolase III 1 (255 aa).

Belongs to the archaeal-type GTP cyclohydrolase family.

It catalyses the reaction GTP + 3 H2O = 2-amino-5-formylamino-6-(5-phospho-D-ribosylamino)pyrimidin-4(3H)-one + 2 phosphate + 2 H(+). Catalyzes the formation of 2-amino-5-formylamino-6-ribofuranosylamino-4(3H)-pyrimidinone ribonucleotide monophosphate and inorganic phosphate from GTP. Also has an independent pyrophosphate phosphohydrolase activity. The protein is GTP cyclohydrolase III 1 (gch31) of Halobacterium salinarum (strain ATCC 700922 / JCM 11081 / NRC-1) (Halobacterium halobium).